A 412-amino-acid chain; its full sequence is Alpha-2,8-sialyltransferase 8E (412 aa).

Over 1–16 the chain is Cytoplasmic; it reads MRYADPSANRDLLGNR. The helical; Signal-anchor for type II membrane protein transmembrane segment at 17 to 37 threads the bilayer; sequence TLLFIFICAFALVTLLQQILY. Over 38-412 the chain is Lumenal; that stretch reads SKSYIKRGFQ…RVHTGTCNCC (375 aa). N-linked (GlcNAc...) asparagine glycosylation is found at asparagine 58, asparagine 64, asparagine 73, and asparagine 92. Cystine bridges form between cysteine 200/cysteine 349 and cysteine 214/cysteine 409. Substrate contacts are provided by residues asparagine 228 and 250-252; that span reads NPS. An N-linked (GlcNAc...) asparagine glycan is attached at asparagine 277. 336-338 is a substrate binding site; it reads STG. The active-site Proton donor/acceptor is histidine 384.

The protein belongs to the glycosyltransferase 29 family. Highly expressed in brain. Expressed at low levels in other tissues, including liver, testis, lung, placenta and spleen.

The protein localises to the golgi apparatus membrane. The enzyme catalyses a ganglioside GT1b (d18:1(4E)) + CMP-N-acetyl-beta-neuraminate = a ganglioside GQ1b (d18:1(4E)) + CMP + H(+). It catalyses the reaction a ganglioside GD3 (d18:1(4E)) + CMP-N-acetyl-beta-neuraminate = a ganglioside GT3 (d18:1(4E)) + CMP + H(+). The catalysed reaction is a ganglioside GD1a (d18:1(4E)) + CMP-N-acetyl-beta-neuraminate = a ganglioside GT1a (d18:1(4E)) + CMP + H(+). It carries out the reaction a ganglioside GM1b (d18:1(4E)) + CMP-N-acetyl-beta-neuraminate = a ganglioside GD1c (d18:1(4E)) + CMP + H(+). The enzyme catalyses a ganglioside GQ1c (d18:1(4E)) + CMP-N-acetyl-beta-neuraminate = a ganglioside GP1c (d18:1(4E)) + CMP + H(+). It functions in the pathway protein modification; protein glycosylation. In terms of biological role, involved in the synthesis of gangliosides GD1c, GT1a, GQ1b, GP1c and GT3 from GD1a, GT1b, GM1b and GD3 respectively. The sequence is that of Alpha-2,8-sialyltransferase 8E from Mus musculus (Mouse).